The sequence spans 519 residues: Zinc finger and BTB domain-containing protein 18.3 (519 aa).

The BTB domain occupies 24–91; that stretch reads CDCTVLVGDA…MYEGKLQFKD (68 aa). The disordered stretch occupies residues 189 to 227; it reads ASIPQTGGEVDTHTTAAGKTADSPCSSTGSLSHRSATSM. Residues 201 to 227 are compositionally biased toward polar residues; sequence HTTAAGKTADSPCSSTGSLSHRSATSM. C2H2-type zinc fingers lie at residues 367–389, 407–429, 435–457, and 463–486; these read FMCPLCNKVFPSPHILQIHLSTH, PTCSLCGKTFSCMYTLKRHERTH, FTCTQCGKSFQYSHNLSRHAVVH, and HACKWCERRFTQSGDLYRHIRKFH.

This sequence belongs to the krueppel C2H2-type zinc-finger protein family. ZBTB18 subfamily.

The protein resides in the nucleus. Functionally, transcriptional repressor that plays a role in various developmental processes. Specifically binds the consensus DNA sequence 5'-[AC]ACATCTG[GT][AC]-3' which contains the E box core, and acts by recruiting chromatin remodeling multiprotein complexes. The chain is Zinc finger and BTB domain-containing protein 18.3 (zbtb18.3) from Xenopus laevis (African clawed frog).